The sequence spans 100 residues: Large ribosomal subunit protein bL21 (100 aa).

It belongs to the bacterial ribosomal protein bL21 family. In terms of assembly, part of the 50S ribosomal subunit. Contacts protein L20.

Functionally, this protein binds to 23S rRNA in the presence of protein L20. The chain is Large ribosomal subunit protein bL21 from Wolbachia pipientis subsp. Culex pipiens (strain wPip).